Consider the following 120-residue polypeptide: Large ribosomal subunit protein uL18 (120 aa).

This sequence belongs to the universal ribosomal protein uL18 family. As to quaternary structure, part of the 50S ribosomal subunit; part of the 5S rRNA/L5/L18/L25 subcomplex. Contacts the 5S and 23S rRNAs.

Its function is as follows. This is one of the proteins that bind and probably mediate the attachment of the 5S RNA into the large ribosomal subunit, where it forms part of the central protuberance. This Exiguobacterium sp. (strain ATCC BAA-1283 / AT1b) protein is Large ribosomal subunit protein uL18.